We begin with the raw amino-acid sequence, 601 residues long: Elongation factor 4 (601 aa).

In terms of domain architecture, tr-type G spans 7 to 189 (DTIRNFSIVA…AIVAKLPPPK (183 aa)). GTP-binding positions include 19–24 (DHGKST) and 136–139 (NKID).

This sequence belongs to the TRAFAC class translation factor GTPase superfamily. Classic translation factor GTPase family. LepA subfamily.

It is found in the cell inner membrane. The enzyme catalyses GTP + H2O = GDP + phosphate + H(+). In terms of biological role, required for accurate and efficient protein synthesis under certain stress conditions. May act as a fidelity factor of the translation reaction, by catalyzing a one-codon backward translocation of tRNAs on improperly translocated ribosomes. Back-translocation proceeds from a post-translocation (POST) complex to a pre-translocation (PRE) complex, thus giving elongation factor G a second chance to translocate the tRNAs correctly. Binds to ribosomes in a GTP-dependent manner. The chain is Elongation factor 4 from Methylobacterium sp. (strain 4-46).